The sequence spans 207 residues: High frequency lysogenization protein HflD homolog (207 aa).

It belongs to the HflD family.

It localises to the cytoplasm. The protein resides in the cell inner membrane. This chain is High frequency lysogenization protein HflD homolog, found in Azotobacter vinelandii (strain DJ / ATCC BAA-1303).